The chain runs to 564 residues: Asparagine synthetase domain-containing protein CG17486 (564 aa).

The Nucleophile role is filled by C2. The Glutamine amidotransferase type-2 domain occupies C2–N180. Positions P280 to K541 constitute an Asparagine synthetase domain.

This chain is Asparagine synthetase domain-containing protein CG17486, found in Drosophila melanogaster (Fruit fly).